A 280-amino-acid chain; its full sequence is Urease accessory protein UreD (280 aa).

This sequence belongs to the UreD family. In terms of assembly, ureD, UreF and UreG form a complex that acts as a GTP-hydrolysis-dependent molecular chaperone, activating the urease apoprotein by helping to assemble the nickel containing metallocenter of UreC. The UreE protein probably delivers the nickel.

The protein localises to the cytoplasm. Its function is as follows. Required for maturation of urease via the functional incorporation of the urease nickel metallocenter. In Pseudomonas aeruginosa (strain UCBPP-PA14), this protein is Urease accessory protein UreD.